A 183-amino-acid chain; its full sequence is ATP synthase subunit delta (183 aa).

Belongs to the ATPase delta chain family. F-type ATPases have 2 components, F(1) - the catalytic core - and F(0) - the membrane proton channel. F(1) has five subunits: alpha(3), beta(3), gamma(1), delta(1), epsilon(1). F(0) has three main subunits: a(1), b(2) and c(10-14). The alpha and beta chains form an alternating ring which encloses part of the gamma chain. F(1) is attached to F(0) by a central stalk formed by the gamma and epsilon chains, while a peripheral stalk is formed by the delta and b chains.

Its subcellular location is the cell inner membrane. In terms of biological role, f(1)F(0) ATP synthase produces ATP from ADP in the presence of a proton or sodium gradient. F-type ATPases consist of two structural domains, F(1) containing the extramembraneous catalytic core and F(0) containing the membrane proton channel, linked together by a central stalk and a peripheral stalk. During catalysis, ATP synthesis in the catalytic domain of F(1) is coupled via a rotary mechanism of the central stalk subunits to proton translocation. Functionally, this protein is part of the stalk that links CF(0) to CF(1). It either transmits conformational changes from CF(0) to CF(1) or is implicated in proton conduction. This chain is ATP synthase subunit delta, found in Solidesulfovibrio magneticus (strain ATCC 700980 / DSM 13731 / RS-1) (Desulfovibrio magneticus).